A 342-amino-acid polypeptide reads, in one-letter code: tRNA(Ile)-lysidine synthase (342 aa).

31–36 (SGGQDS) serves as a coordination point for ATP.

It belongs to the tRNA(Ile)-lysidine synthase family.

The protein resides in the cytoplasm. It carries out the reaction cytidine(34) in tRNA(Ile2) + L-lysine + ATP = lysidine(34) in tRNA(Ile2) + AMP + diphosphate + H(+). Ligates lysine onto the cytidine present at position 34 of the AUA codon-specific tRNA(Ile) that contains the anticodon CAU, in an ATP-dependent manner. Cytidine is converted to lysidine, thus changing the amino acid specificity of the tRNA from methionine to isoleucine. This is tRNA(Ile)-lysidine synthase from Nostoc sp. (strain PCC 7120 / SAG 25.82 / UTEX 2576).